A 511-amino-acid polypeptide reads, in one-letter code: Apolipoprotein N-acyltransferase (511 aa).

The next 6 helical transmembrane spans lie at 7 to 25 (PGWPGHLLALAAGALTPLA), 58 to 78 (GWWYGFGAFGAGTSWIYVSIH), 90 to 110 (FLMLGFTAGVAFFFALPAWLW), 125 to 145 (LAFAALWLALELFRSWFLTGF), 163 to 183 (VPVGGVWLSSFVIALSAALLV), and 192 to 212 (GASLLLALVLLLGPWAAGLYL). Residues 230–470 (IQGNIAQELK…QGILRGEVIP (241 aa)) enclose the CN hydrolase domain. Glu269 (proton acceptor) is an active-site residue. The active site involves Lys330. Cys382 serves as the catalytic Nucleophile. The helical transmembrane segment at 478 to 498 (LQYRVWPLAGLAGVLLLWALL) threads the bilayer.

The protein belongs to the CN hydrolase family. Apolipoprotein N-acyltransferase subfamily.

The protein localises to the cell inner membrane. It carries out the reaction N-terminal S-1,2-diacyl-sn-glyceryl-L-cysteinyl-[lipoprotein] + a glycerophospholipid = N-acyl-S-1,2-diacyl-sn-glyceryl-L-cysteinyl-[lipoprotein] + a 2-acyl-sn-glycero-3-phospholipid + H(+). Its pathway is protein modification; lipoprotein biosynthesis (N-acyl transfer). In terms of biological role, catalyzes the phospholipid dependent N-acylation of the N-terminal cysteine of apolipoprotein, the last step in lipoprotein maturation. This chain is Apolipoprotein N-acyltransferase, found in Pseudomonas paraeruginosa (strain DSM 24068 / PA7) (Pseudomonas aeruginosa (strain PA7)).